A 63-amino-acid chain; its full sequence is Small ribosomal subunit protein bS21 (63 aa).

It belongs to the bacterial ribosomal protein bS21 family.

In Bacteroides fragilis (strain ATCC 25285 / DSM 2151 / CCUG 4856 / JCM 11019 / LMG 10263 / NCTC 9343 / Onslow / VPI 2553 / EN-2), this protein is Small ribosomal subunit protein bS21.